Reading from the N-terminus, the 665-residue chain is Macrolide export ATP-binding/permease protein MacB (665 aa).

Positions Met-17–Lys-255 constitute an ABC transporter domain. Residue Gly-53–Ser-60 coordinates ATP. Transmembrane regions (helical) follow at residues Leu-287–Gly-307, Ile-544–Val-564, Phe-588–Phe-608, and Ser-630–Ala-650.

It belongs to the ABC transporter superfamily. Macrolide exporter (TC 3.A.1.122) family. In terms of assembly, homodimer. Part of the tripartite efflux system MacAB-TolC, which is composed of an inner membrane transporter, MacB, a periplasmic membrane fusion protein, MacA, and an outer membrane component, TolC. The complex forms a large protein conduit and can translocate molecules across both the inner and outer membranes. Interacts with MacA.

Its subcellular location is the cell inner membrane. Functionally, part of the tripartite efflux system MacAB-TolC. MacB is a non-canonical ABC transporter that contains transmembrane domains (TMD), which form a pore in the inner membrane, and an ATP-binding domain (NBD), which is responsible for energy generation. Confers resistance against macrolides. This is Macrolide export ATP-binding/permease protein MacB from Psychrobacter arcticus (strain DSM 17307 / VKM B-2377 / 273-4).